The sequence spans 261 residues: Phosphatidylglycerol--prolipoprotein diacylglyceryl transferase (261 aa).

Helical transmembrane passes span 19–39 (VHWYGLMYLVGFAMAWGLALY), 56–76 (LIFYGALGLIIGGRLGYMLFY), 92–112 (WRGGMSFHGGLIGVIVTTWIF), 126–146 (FVVPLVPLGLAAGRIGNFING), 173–193 (QLYEFLLEGVLLFIVIWWFSA), 199–219 (FAVSSLFLLCYGLFRFTAEFF), and 227–247 (GFVAFGWLTRGQELSLPMIII). Arg-139 serves as a coordination point for a 1,2-diacyl-sn-glycero-3-phospho-(1'-sn-glycerol).

The protein belongs to the Lgt family.

It is found in the cell inner membrane. The catalysed reaction is L-cysteinyl-[prolipoprotein] + a 1,2-diacyl-sn-glycero-3-phospho-(1'-sn-glycerol) = an S-1,2-diacyl-sn-glyceryl-L-cysteinyl-[prolipoprotein] + sn-glycerol 1-phosphate + H(+). It functions in the pathway protein modification; lipoprotein biosynthesis (diacylglyceryl transfer). In terms of biological role, catalyzes the transfer of the diacylglyceryl group from phosphatidylglycerol to the sulfhydryl group of the N-terminal cysteine of a prolipoprotein, the first step in the formation of mature lipoproteins. This Coxiella burnetii (strain CbuK_Q154) (Coxiella burnetii (strain Q154)) protein is Phosphatidylglycerol--prolipoprotein diacylglyceryl transferase.